A 324-amino-acid chain; its full sequence is 4-hydroxybenzoyl-CoA reductase subunit beta (324 aa).

The FAD-binding PCMH-type domain occupies 2 to 217; sequence NILTDFRTHR…AAIEVPPTGA (216 aa). FAD is bound by residues 29–36, Thr-111, Asn-115, and Gln-118; that span reads PLGAGTDL. The [4Fe-4S] cluster site is built by Cys-122, Cys-138, Cys-146, and Cys-155. FAD contacts are provided by Asp-162 and Lys-224.

As to quaternary structure, heterohexamer of two alpha, two beta and two gamma subunits. FAD is required as a cofactor. The cofactor is [4Fe-4S] cluster.

It carries out the reaction oxidized 2[4Fe-4S]-[ferredoxin] + benzoyl-CoA + H2O = 4-hydroxybenzoyl-CoA + reduced 2[4Fe-4S]-[ferredoxin] + 2 H(+). Its activity is regulated as follows. Inactivated by low concentrations of cyanide in vitro. In terms of biological role, component of a complex that catalyzes the reductive dehydroxylation of 4-hydroxybenzoyl-CoA to benzoyl-CoA. Reaction is not reversible. Is a key enzyme in the anaerobic degradation of phenolic compounds. In Thauera aromatica, this protein is 4-hydroxybenzoyl-CoA reductase subunit beta (hcrB).